The chain runs to 331 residues: MATTPPPADAPRHVPVLRDRCVNLLAPAIEAANLAGRRAVVVDATLGMGGHSEAMLTRFENLHLIGIDRDTQALDLSGARLKPFEDRTDLVHAVYDEITEVLDDLGFESIDGVLMDLGVSSLQLDEAERGFAYSYDAPLDMRMDTSRGQSAADVVNSYSETELVSIIRRWGEEKFAGRIANRIVAARAEKPFAGTGELVEVIRKAVPAAAARTGGHPAKRTFQALRIEVNEELVVLERAVPAAVDALAIGGRAVVMSYHSLEDKIVKKFFSTGVTSSAPPGFPVELDSQKPELKTLTKGTEVPTEAEIAENPRAASARLRAVERIRPRRTS.

S-adenosyl-L-methionine contacts are provided by residues Gly-49 to His-51, Asp-68, Leu-102, Asp-116, and Gln-123.

This sequence belongs to the methyltransferase superfamily. RsmH family.

It is found in the cytoplasm. It carries out the reaction cytidine(1402) in 16S rRNA + S-adenosyl-L-methionine = N(4)-methylcytidine(1402) in 16S rRNA + S-adenosyl-L-homocysteine + H(+). In terms of biological role, specifically methylates the N4 position of cytidine in position 1402 (C1402) of 16S rRNA. The chain is Ribosomal RNA small subunit methyltransferase H from Renibacterium salmoninarum (strain ATCC 33209 / DSM 20767 / JCM 11484 / NBRC 15589 / NCIMB 2235).